The following is a 209-amino-acid chain: GTP-binding protein RHO1 (209 aa).

Serine 2 is modified (N-acetylserine). Residue glycine 17–threonine 24 participates in GTP binding. The Effector region motif lies at tyrosine 39 to tyrosine 47. GTP-binding positions include aspartate 64 to glutamine 68 and cysteine 122 to aspartate 125. The segment at lysine 187–leucine 209 is disordered. Over residues threonine 190–leucine 209 the composition is skewed to basic residues. Cysteine 206 is subject to Cysteine methyl ester. A lipid anchor (S-geranylgeranyl cysteine) is attached at cysteine 206. Residues valine 207 to leucine 209 constitute a propeptide, removed in mature form.

It belongs to the small GTPase superfamily. Rho family. Interacts with BEM4; the interaction is direct. Interacts with SEC3; the interaction is direct. Interacts with the GAP BAG7. Interacts with the GAP LRG1. Interacts with the GAP SAC7. Interacts with the GAP RDI1. Interacts with the 1,3-beta-glucan synthase component FKS1. Interacts with the protein kinase PKC1. Interacts with the G protein beta subunit STE4. Interacts with SKN7. Interacts with TUS1. Interacts with BNI1.

The protein resides in the cell membrane. The protein localises to the endosome membrane. Its subcellular location is the peroxisome membrane. The catalysed reaction is GTP + H2O = GDP + phosphate + H(+). Alternates between an inactive form bound to GDP and an active form bound to GTP. Activated by the guanine nucleotide-exchange factors (GEFs) ROM1, ROM2 and TUS1, and inactivated by GTPase-activating proteins (GAPs) BAG7, BEM2, LRG1, and SAC7, and the Rho GDP-dissociation inhibitor RDI1. The different GAPs regulate RHO1 in a target-specific manner. In terms of biological role, acts as a central regulator in the cell wall integrity signaling pathway, which is regulated by the cell cycle and in response to various types of cell wall stress. Integrates signals from different cell surface sensors, and activates a set of effectors, regulating processes including beta-glucan synthesis at the site of wall remodeling, gene expression related to cell wall biogenesis, organization of the actin cytoskeleton, and protein- and secretory vesicle-targeting to the growth site. Activates the protein kinase C (PKC1) MAP kinase cascade, the beta-1,3-glucan synthase (FKS1), the formin BNI1, the exocyst component SEC3 and the transcription factor SKN7. This chain is GTP-binding protein RHO1 (RHO1), found in Saccharomyces cerevisiae (strain ATCC 204508 / S288c) (Baker's yeast).